We begin with the raw amino-acid sequence, 213 residues long: Ribosomal RNA small subunit methyltransferase G (213 aa).

S-adenosyl-L-methionine is bound by residues G77, F82, 130-131 (IE), and R146.

This sequence belongs to the methyltransferase superfamily. RNA methyltransferase RsmG family.

It is found in the cytoplasm. The catalysed reaction is guanosine(527) in 16S rRNA + S-adenosyl-L-methionine = N(7)-methylguanosine(527) in 16S rRNA + S-adenosyl-L-homocysteine. In terms of biological role, specifically methylates the N7 position of guanine in position 527 of 16S rRNA. In Bartonella tribocorum (strain CIP 105476 / IBS 506), this protein is Ribosomal RNA small subunit methyltransferase G.